Reading from the N-terminus, the 119-residue chain is MKFTKNEARLRRKVRIRKKISGTAERPRLVVYRSNLHIYAQIVDDTTGSTLVATSTLSISRTQEGVHANKAGAELVGKEIARLAKDKDIQSVVFDRNGYLYHGRIKAVADGAREAGLEF.

Belongs to the universal ribosomal protein uL18 family. Part of the 50S ribosomal subunit; part of the 5S rRNA/L5/L18/L25 subcomplex. Contacts the 5S and 23S rRNAs.

Functionally, this is one of the proteins that bind and probably mediate the attachment of the 5S RNA into the large ribosomal subunit, where it forms part of the central protuberance. The protein is Large ribosomal subunit protein uL18 of Nitratidesulfovibrio vulgaris (strain DP4) (Desulfovibrio vulgaris).